The sequence spans 690 residues: MSIDNELSKCRNIGIMAHIDAGKTTTTERILFYTGKQNRIGEVHEGAASMDWMEQEKERGITITSAATTCFWNGHRINIIDTPGHVDFTIEVERSLRVLDGAVAVFDGVAGVEPQSETVWRQADKYNVPRICFMNKMDRMGADFYRCVDMVVERLGATPLVLQLPIGIEKDFVGVVDLLEMRSIIWDEDSLGASFHYGEIPKDMLDKAQEYRNKLLESAVELNDEAMNLYFEGKEISVSLLKSCIRAGVIQSKFVPVLCGSAFKNRGVQPLLDAVVDFLPAPNDIPMMEALDVKTSNTINIKSSIDGKFVALAFKVMTDKFVGSLTFIRIYSGRLSSKTTVLNAVKNSTESIGRILLMHANNREDITEAKAGDIVALAGLKKTVTGDTLCTLDQPIILERMEFPEPVMEIAVEPKSTADQEKMGIALSRLVAEDPSLGMCVNPESGQTILKGMGELHLEVIVDRMRREFNVEANIGAPQVAYRETITKSVEIEYIHKKQTGGAGQFAKVNILFEPLPPGSGFQFESKITGGAIPKEYIPGVQNGLENIRGSGMLAGFPVIDFKATLVDGAFHEVDSSPLAFELAAKGAFRDMVNKAGAILLEPIMKVEIITPDEYMGDVIGDINSRRGRVAEMQDRHNTKVILAFIPLAKMFGYVKDLRSMSQGRAQYSMYFSCYEQVPDNIVANEIKTK.

Residues 8-283 (SKCRNIGIMA…AVVDFLPAPN (276 aa)) enclose the tr-type G domain. GTP-binding positions include 17 to 24 (AHIDAGKT), 81 to 85 (DTPGH), and 135 to 138 (NKMD).

It belongs to the TRAFAC class translation factor GTPase superfamily. Classic translation factor GTPase family. EF-G/EF-2 subfamily.

The protein localises to the cytoplasm. Its function is as follows. Catalyzes the GTP-dependent ribosomal translocation step during translation elongation. During this step, the ribosome changes from the pre-translocational (PRE) to the post-translocational (POST) state as the newly formed A-site-bound peptidyl-tRNA and P-site-bound deacylated tRNA move to the P and E sites, respectively. Catalyzes the coordinated movement of the two tRNA molecules, the mRNA and conformational changes in the ribosome. This is Elongation factor G from Ehrlichia chaffeensis (strain ATCC CRL-10679 / Arkansas).